The sequence spans 352 residues: Galactokinase (352 aa).

17–20 (EHTD) is a binding site for substrate. Residues Ser-49 and 101–107 (GAGLSSS) contribute to the ATP site. The Mg(2+) site is built by Ser-107 and Glu-139. The Proton acceptor role is filled by Asp-151. Tyr-200 lines the substrate pocket.

This sequence belongs to the GHMP kinase family. GalK subfamily. Monomer.

It localises to the cytoplasm. It catalyses the reaction alpha-D-galactose + ATP = alpha-D-galactose 1-phosphate + ADP + H(+). Its pathway is carbohydrate metabolism; galactose metabolism. In terms of biological role, catalyzes the transfer of the gamma-phosphate of ATP to D-galactose to form alpha-D-galactose-1-phosphate (Gal-1-P). Is very specific for its substrate, since it is not able to use D-glucose, D-fructose, D-mannose, 2-deoxy-D-glucose, and D-glucosamine as substrates. This chain is Galactokinase, found in Pyrococcus furiosus (strain ATCC 43587 / DSM 3638 / JCM 8422 / Vc1).